A 93-amino-acid polypeptide reads, in one-letter code: Alpha-defensin 3 (93 aa).

An N-terminal signal peptide occupies residues 1-16 (MKTLVLLSALVLLAFQ). Residues 17 to 58 (VQADPIQNTDEETKTEEQPGEDDQAVSVSFGDPEGSSLQEES) constitute a propeptide that is removed on maturation. The tract at residues 22-56 (IQNTDEETKTEEQPGEDDQAVSVSFGDPEGSSLQE) is disordered. Intrachain disulfides connect cysteine 64–cysteine 92, cysteine 66–cysteine 81, and cysteine 71–cysteine 91.

It belongs to the alpha-defensin family. As to expression, paneth cells of the small bowel.

It localises to the secreted. Its function is as follows. Probably contributes to the antimicrobial barrier function of the small bowel mucosa. The sequence is that of Alpha-defensin 3 (Defa3) from Mus musculus (Mouse).